The sequence spans 344 residues: L-threonine 3-dehydrogenase (344 aa).

Zn(2+) is bound at residue C42. Catalysis depends on charge relay system residues T44 and H47. Residues H67, E68, C97, C100, C103, and C111 each contribute to the Zn(2+) site. NAD(+)-binding positions include I179, D199, R204, 266–268 (LGI), and 290–291 (IY).

Belongs to the zinc-containing alcohol dehydrogenase family. As to quaternary structure, homotetramer. Zn(2+) serves as cofactor.

The protein localises to the cytoplasm. It catalyses the reaction L-threonine + NAD(+) = (2S)-2-amino-3-oxobutanoate + NADH + H(+). The protein operates within amino-acid degradation; L-threonine degradation via oxydo-reductase pathway; glycine from L-threonine: step 1/2. In terms of biological role, catalyzes the NAD(+)-dependent oxidation of L-threonine to 2-amino-3-ketobutyrate. The polypeptide is L-threonine 3-dehydrogenase (Chelativorans sp. (strain BNC1)).